The primary structure comprises 355 residues: GTP 3',8-cyclase (355 aa).

Residues 16-242 (RYGRRATDMR…PDPRARDGAP (227 aa)) form the Radical SAM core domain. GTP is bound at residue arginine 25. The [4Fe-4S] cluster site is built by cysteine 32 and cysteine 36. Tyrosine 38 is an S-adenosyl-L-methionine binding site. Cysteine 39 is a binding site for [4Fe-4S] cluster. Residue arginine 76 participates in GTP binding. Glycine 80 is an S-adenosyl-L-methionine binding site. Residue threonine 107 coordinates GTP. Residue serine 131 coordinates S-adenosyl-L-methionine. Residue lysine 168 coordinates GTP. S-adenosyl-L-methionine is bound at residue methionine 202. 2 residues coordinate [4Fe-4S] cluster: cysteine 277 and cysteine 280. Position 282–284 (282–284 (RTR)) interacts with GTP. Cysteine 294 is a binding site for [4Fe-4S] cluster.

It belongs to the radical SAM superfamily. MoaA family. As to quaternary structure, monomer. It depends on [4Fe-4S] cluster as a cofactor.

It catalyses the reaction GTP + AH2 + S-adenosyl-L-methionine = (8S)-3',8-cyclo-7,8-dihydroguanosine 5'-triphosphate + 5'-deoxyadenosine + L-methionine + A + H(+). It functions in the pathway cofactor biosynthesis; molybdopterin biosynthesis. In terms of biological role, catalyzes, together with MoaC, the conversion of 5'-GTP to cyclic pyranopterin monophosphate (cPMP or molybdopterin precursor Z). Catalyzes the cyclization of GTP to (8S)-3',8-cyclo-7,8-dihydroguanosine 5'-triphosphate. The polypeptide is GTP 3',8-cyclase (Paenarthrobacter nicotinovorans (Arthrobacter nicotinovorans)).